A 598-amino-acid chain; its full sequence is DNA mismatch repair protein MutL (598 aa).

The protein belongs to the DNA mismatch repair MutL/HexB family.

This protein is involved in the repair of mismatches in DNA. It is required for dam-dependent methyl-directed DNA mismatch repair. May act as a 'molecular matchmaker', a protein that promotes the formation of a stable complex between two or more DNA-binding proteins in an ATP-dependent manner without itself being part of a final effector complex. The sequence is that of DNA mismatch repair protein MutL from Thiobacillus denitrificans (strain ATCC 25259 / T1).